A 174-amino-acid polypeptide reads, in one-letter code: Ribosome maturation factor RimM (174 aa).

Positions 97 to 169 (PDTYYDHQLE…ILEIDPPDGL (73 aa)) constitute a PRC barrel domain.

This sequence belongs to the RimM family. Binds ribosomal protein uS19.

It localises to the cytoplasm. In terms of biological role, an accessory protein needed during the final step in the assembly of 30S ribosomal subunit, possibly for assembly of the head region. Essential for efficient processing of 16S rRNA. May be needed both before and after RbfA during the maturation of 16S rRNA. It has affinity for free ribosomal 30S subunits but not for 70S ribosomes. This is Ribosome maturation factor RimM from Mycobacterium ulcerans (strain Agy99).